The sequence spans 416 residues: Nuclear hormone receptor family member nhr-59 (416 aa).

The segment at residues 17 to 94 (QTFCQVCGQE…IGMDIQNFQF (78 aa)) is a DNA-binding region (nuclear receptor). 2 NR C4-type zinc fingers span residues 20 to 40 (CQVCGQESHGAHFGAITCRAC) and 57 to 82 (CKDGRGRCKILTNGRSCCKKCRLKKC). In terms of domain architecture, NR LBD spans 162 to 415 (TRLQKLSSSL…FSHPELVKDV (254 aa)).

It belongs to the nuclear hormone receptor family.

Its subcellular location is the nucleus. Its function is as follows. Orphan nuclear receptor. The protein is Nuclear hormone receptor family member nhr-59 of Caenorhabditis elegans.